The primary structure comprises 3080 residues: Protein PIEZO homolog (3080 aa).

A run of 6 helical transmembrane segments spans residues Y28–L48, P57–V77, L86–F106, V113–P133, Y204–A224, and V232–Y252. N276 is a glycosylation site (N-linked (GlcNAc...) asparagine). A helical transmembrane segment spans residues W285–F305. 2 N-linked (GlcNAc...) asparagine glycosylation sites follow: N312 and N339. 2 consecutive transmembrane segments (helical) span residues I362–G382 and V396–I416. N-linked (GlcNAc...) asparagine glycosylation is present at N434. A helical membrane pass occupies residues W438–S458. The interval K469–P548 is disordered. Residues Q473–Q505 show a composition bias toward low complexity. The span at I512–Q532 shows a compositional bias: polar residues. N514, N567, and N606 each carry an N-linked (GlcNAc...) asparagine glycan. The next 3 membrane-spanning stretches (helical) occupy residues G672–I692, F700–L720, and Y740–I760. A glycan (N-linked (GlcNAc...) asparagine) is linked at N795. 3 consecutive transmembrane segments (helical) span residues F827–V847, M849–I869, and F872–F892. An N-linked (GlcNAc...) asparagine glycan is attached at N918. Residues L928–I948 form a helical membrane-spanning segment. N992 is a glycosylation site (N-linked (GlcNAc...) asparagine). The next 2 membrane-spanning stretches (helical) occupy residues F1036–I1056 and I1067–L1087. Residue N1109 is glycosylated (N-linked (GlcNAc...) asparagine). The tract at residues Q1158–K1185 is disordered. Over residues H1166 to Q1176 the composition is skewed to acidic residues. 3 N-linked (GlcNAc...) asparagine glycosylation sites follow: N1191, N1240, and N1251. The interval D1199–S1253 is disordered. Residues N1202–N1252 show a composition bias toward low complexity. The next 3 membrane-spanning stretches (helical) occupy residues V1281–I1301, I1316–V1336, and L1360–F1380. 2 N-linked (GlcNAc...) asparagine glycosylation sites follow: N1424 and N1440. The next 2 helical transmembrane spans lie at V1472–Y1492 and I1519–F1539. Residues N1559 and N1589 are each glycosylated (N-linked (GlcNAc...) asparagine). Residues I1619 to A1639 form a helical membrane-spanning segment. Basic residues predominate over residues R1704 to H1714. Residues R1704 to V1812 form a disordered region. Residues Y1715–N1742 are compositionally biased toward low complexity. N1731, N1734, N1763, N1768, N1771, N1779, N1807, and N1864 each carry an N-linked (GlcNAc...) asparagine glycan. Over residues K1762–M1782 the composition is skewed to polar residues. A compositionally biased stretch (low complexity) spans N1789 to V1812. Disordered stretches follow at residues L1873–E1899 and S1958–S2032. The span at S1958–N2021 shows a compositional bias: low complexity. N2027 carries an N-linked (GlcNAc...) asparagine glycan. A run of 2 helical transmembrane segments spans residues I2078–L2098 and F2112–I2132. N-linked (GlcNAc...) asparagine glycosylation is present at N2148. A helical transmembrane segment spans residues V2199–I2219. The segment at L2277 to N2367 is disordered. N-linked (GlcNAc...) asparagine glycosylation occurs at N2285. Residues N2288–N2367 show a composition bias toward low complexity. Transmembrane regions (helical) follow at residues I2427–I2447 and Y2457–Q2477. Residue N2478 is glycosylated (N-linked (GlcNAc...) asparagine). Transmembrane regions (helical) follow at residues Y2500–Y2520, Q2530–V2550, F2553–Y2573, and F2671–I2691. N-linked (GlcNAc...) asparagine glycans are attached at residues N2762, N2790, N2837, N2840, N2848, N2858, N2908, N2913, and N2935. The segment at Q2835 to N2863 is disordered. The span at S2836–N2863 shows a compositional bias: low complexity. Residues I2955 to V2975 form a helical membrane-spanning segment. The segment at P3054–N3080 is disordered. An N-linked (GlcNAc...) asparagine glycan is attached at N3057. Residues N3061 to N3074 show a composition bias toward low complexity.

The protein belongs to the PIEZO (TC 1.A.75) family.

It localises to the membrane. This Dictyostelium discoideum (Social amoeba) protein is Protein PIEZO homolog.